The following is a 55-amino-acid chain: Spermatid nuclear transition protein 1 (55 aa).

A compositionally biased stretch (basic residues) spans methionine 1 to lysine 42. The segment at methionine 1–leucine 55 is disordered. Serine 9, serine 37, and serine 40 each carry phosphoserine.

The protein belongs to the nuclear transition protein 1 family. Testis.

The protein resides in the nucleus. It localises to the chromosome. Plays a key role in the replacement of histones to protamine in the elongating spermatids of mammals. In condensing spermatids, loaded onto the nucleosomes, where it promotes the recruitment and processing of protamines, which are responsible for histone eviction. In Sus scrofa (Pig), this protein is Spermatid nuclear transition protein 1 (TNP1).